Reading from the N-terminus, the 269-residue chain is Putative imidazole glycerol phosphate synthase subunit hisF2 (269 aa).

Asp-133 is a catalytic residue.

Belongs to the HisA/HisF family. In terms of assembly, heterodimer of HisH and HisF.

The protein localises to the cytoplasm. It carries out the reaction 5-[(5-phospho-1-deoxy-D-ribulos-1-ylimino)methylamino]-1-(5-phospho-beta-D-ribosyl)imidazole-4-carboxamide + L-glutamine = D-erythro-1-(imidazol-4-yl)glycerol 3-phosphate + 5-amino-1-(5-phospho-beta-D-ribosyl)imidazole-4-carboxamide + L-glutamate + H(+). It participates in amino-acid biosynthesis; L-histidine biosynthesis; L-histidine from 5-phospho-alpha-D-ribose 1-diphosphate: step 5/9. Its function is as follows. IGPS catalyzes the conversion of PRFAR and glutamine to IGP, AICAR and glutamate. The HisF subunit catalyzes the cyclization activity that produces IGP and AICAR from PRFAR using the ammonia provided by the HisH subunit. This chain is Putative imidazole glycerol phosphate synthase subunit hisF2 (hisF2), found in Parasynechococcus marenigrum (strain WH8102).